Here is a 338-residue protein sequence, read N- to C-terminus: Glycerol-3-phosphate dehydrogenase [NAD(P)+] (338 aa).

Residues S12, W13, and K110 each contribute to the NADPH site. Sn-glycerol 3-phosphate-binding residues include K110, G141, and S143. A145 contacts NADPH. Sn-glycerol 3-phosphate-binding residues include K196, D249, S259, R260, and N261. Catalysis depends on K196, which acts as the Proton acceptor. R260 is a binding site for NADPH. Residues V284 and E286 each contribute to the NADPH site.

It belongs to the NAD-dependent glycerol-3-phosphate dehydrogenase family.

The protein localises to the cytoplasm. The enzyme catalyses sn-glycerol 3-phosphate + NAD(+) = dihydroxyacetone phosphate + NADH + H(+). It carries out the reaction sn-glycerol 3-phosphate + NADP(+) = dihydroxyacetone phosphate + NADPH + H(+). It functions in the pathway membrane lipid metabolism; glycerophospholipid metabolism. Catalyzes the reduction of the glycolytic intermediate dihydroxyacetone phosphate (DHAP) to sn-glycerol 3-phosphate (G3P), the key precursor for phospholipid synthesis. This chain is Glycerol-3-phosphate dehydrogenase [NAD(P)+], found in Pediococcus pentosaceus (strain ATCC 25745 / CCUG 21536 / LMG 10740 / 183-1w).